Reading from the N-terminus, the 339-residue chain is UPF0324 membrane protein CPE0129 (339 aa).

8 helical membrane passes run 12-30, 35-54, 90-112, 122-144, 156-178, 210-232, 259-281, and 316-338; these read ILPG…EFLG, TIGA…NTLF, LGFN…TYFI, YSLL…VSPV, ITIV…SILY, VVEL…VLVF, WFII…GILG, and MLYG…NIFI.

The protein belongs to the UPF0324 family.

The protein resides in the cell membrane. The chain is UPF0324 membrane protein CPE0129 from Clostridium perfringens (strain 13 / Type A).